Here is a 483-residue protein sequence, read N- to C-terminus: Protein FIZZY-RELATED 2 (483 aa).

The disordered stretch occupies residues methionine 1–asparagine 28. Residues threonine 7–asparagine 28 show a composition bias toward polar residues. 7 WD repeats span residues glutamine 174–leucine 211, glycine 215–threonine 254, glycine 257–serine 294, glycine 298–lysine 337, glutamate 340–serine 382, aspartate 384–threonine 425, and glycine 428–asparagine 467.

Belongs to the WD repeat CDC20/Fizzy family. Associates with the APC/C complex. Interacts with CDC20-1, CDC20-2, CYCA1-1, CYCA1-2, CYCA3-4, CYCB1-1 and CYCB1-2. Binds to GIG1 and PYM. In terms of tissue distribution, expressed in seedlings, flowers, leaves and roots. Expressed in the differentiating cell files of the root elongation zone.

The protein localises to the nucleus. It functions in the pathway protein modification; protein ubiquitination. Its function is as follows. Activator protein that regulates the ubiquitin ligase activity and substrate specificity of the anaphase promoting complex/cyclosome (APC/C). Necessary and sufficient for endoreduplication and correct cell expansion. Controls meristem size by stimulating endoreduplication in the elongation zone. The chain is Protein FIZZY-RELATED 2 (FZR2) from Arabidopsis thaliana (Mouse-ear cress).